Here is a 146-residue protein sequence, read N- to C-terminus: Hemoglobin subunit beta-S/F (146 aa).

Residue V1 is modified to N-acetylvaline. The Globin domain occupies 2-146; sequence HLTDGEKNAI…VANALSHKYH (145 aa). The residue at position 44 (S44) is a Phosphoserine. K59 carries the N6-acetyllysine modification. H63 serves as a coordination point for heme b. K82 is subject to N6-acetyllysine. Residue H92 participates in heme b binding. C93 is modified (S-nitrosocysteine). K144 carries the post-translational modification N6-acetyllysine.

Belongs to the globin family. As to quaternary structure, heterotetramer of two alpha chains and two beta chains. In terms of tissue distribution, red blood cells.

Involved in oxygen transport from the lung to the various peripheral tissues. The sequence is that of Hemoglobin subunit beta-S/F from Urocitellus townsendii (Townsend's ground squirrel).